We begin with the raw amino-acid sequence, 430 residues long: Tektin-2 (430 aa).

2 coiled-coil regions span residues 80–162 and 225–382; these read KCLT…FEQL and NKDR…CKAN.

Belongs to the tektin family. Microtubule inner protein component of sperm flagellar doublet microtubules. May interact with CCDC172. In terms of processing, tyrosine phosphorylated. Post-translationally, ubiquitinated, leading to its degradation. Deubiquitinated by USP16, promoting its stability. As to expression, expressed at high levels in testis, trachea and fetal lung, and at lower levels in ovary, pituitary, adult lung, fetal brain and fetal kidney.

The protein resides in the cytoplasm. Its subcellular location is the cytoskeleton. The protein localises to the cilium axoneme. It is found in the flagellum axoneme. It localises to the microtubule organizing center. Microtubule inner protein (MIP) part of the dynein-decorated doublet microtubules (DMTs) in cilia and flagellar axoneme. Plays a key role in the assembly or attachment of the inner dynein arm to microtubules in sperm flagella and tracheal cilia. Forms filamentous polymers in the walls of ciliary and flagellar microtubules. This is Tektin-2 from Homo sapiens (Human).